Consider the following 586-residue polypeptide: Major facilitator superfamily domain-containing protein 6-like (586 aa).

Transmembrane regions (helical) follow at residues 50–70 (TLMGTKHLIAAFWAPVCAFLA) and 78–98 (ALLIGSLLGSVGASLLMVLVP). The tract at residues 133–160 (AQESASSHPAKRTAEVEMPGFRNPPGES) is disordered. 9 helical membrane passes run 246-266 (FILSLGSVAFWELLTAPLEQV), 287-307 (LWVWRLLGMSAGVCGITALVG), 326-346 (GYSVVSTLALLVSIAFPIPIC), 361-381 (IVGGDPHLILLASTTVLVGAI), 400-420 (ELVMGFSVALSLLGEILLHPF), 433-455 (LVGLGLSCLAGQLLYYSFLWSWW), 456-476 (SVLPIQILSAISNRALWWAVG), 499-519 (FYGSGCSLGSFVGGFVVMRFS), and 521-541 (AVLYQACCVALLLWLALLLSI).

The protein belongs to the major facilitator superfamily. MFSD6 family.

It localises to the membrane. The sequence is that of Major facilitator superfamily domain-containing protein 6-like (MFSD6L) from Homo sapiens (Human).